Reading from the N-terminus, the 629-residue chain is Transmembrane 9 superfamily protein C1105.08 (629 aa).

The signal sequence occupies residues 1 to 26; sequence MLLPSIPSCSFSFVVFVSVLLQTCFS. The Lumenal portion of the chain corresponds to 27–266; sequence FQLTPLSPKN…MHIESRQIRW (240 aa). Residue Asn-157 is glycosylated (N-linked (GlcNAc...) asparagine). Residues 267–287 form a helical membrane-spanning segment; sequence IFIIHSAIIDTFLIFVVSIIL. Topologically, residues 288–337 are cytoplasmic; sequence YRTLNRDINKYNSAFVDQEDVQEDFGWKLVHGDVFRPPRRPMLFSILLGT. A helical membrane pass occupies residues 338-358; sequence GAQLLFMSSGIVLFAIFGIVA. Residues 359-364 are Lumenal-facing; it reads PSRRGS. The chain crosses the membrane as a helical span at residues 365–385; sequence LATATVALFIISGFVSGYVSA. Residues 386–401 are Cytoplasmic-facing; sequence LSYKLMQGMLRKRNLL. The helical transmembrane segment at 402-422 threads the bilayer; it reads LTPFVVPGFMLAAALFFNMVF. Topologically, residues 423–436 are lumenal; sequence WSKSSSSTVPFSSW. A helical transmembrane segment spans residues 437–457; it reads LLLIFLYLLFTVPLSFVGSLI. Residues 458–488 lie on the Cytoplasmic side of the membrane; it reads GFRSREFVPPVRTNQIPRQIPSHSIWLSSFP. A helical transmembrane segment spans residues 489–509; it reads SAIIGGSIPFLVILIELFSIL. At 510–519 the chain is on the lumenal side; sequence DSLWFHPLYF. The helical transmembrane segment at 520 to 544 threads the bilayer; the sequence is MFGFSFFCFGILVTTCIMVSIITVY. Topologically, residues 545–558 are cytoplasmic; sequence FQLCSENYNWWWRS. A helical transmembrane segment spans residues 559-579; sequence FITPGFCGIYVFIFSVFYWFF. The Lumenal portion of the chain corresponds to 580-598; sequence KISSSSLATAVLYFGYSLL. The chain crosses the membrane as a helical span at residues 599-619; that stretch reads ISVLVFFLCGSVGFFGAFLFV. Topologically, residues 620–629 are cytoplasmic; that stretch reads NKIYASIKID.

The protein belongs to the nonaspanin (TM9SF) (TC 9.A.2) family.

It localises to the golgi apparatus membrane. It is found in the vacuole membrane. The chain is Transmembrane 9 superfamily protein C1105.08 from Schizosaccharomyces pombe (strain 972 / ATCC 24843) (Fission yeast).